We begin with the raw amino-acid sequence, 118 residues long: UPF0342 protein BPUM_0928 (118 aa).

Belongs to the UPF0342 family.

In Bacillus pumilus (strain SAFR-032), this protein is UPF0342 protein BPUM_0928.